Consider the following 143-residue polypeptide: Nucleoside diphosphate kinase (143 aa).

Residues Lys11, Phe59, Arg87, Thr93, Arg104, and Asn114 each contribute to the ATP site. The Pros-phosphohistidine intermediate role is filled by His117.

It belongs to the NDK family. As to quaternary structure, homotetramer. Mg(2+) is required as a cofactor.

The protein localises to the cytoplasm. The enzyme catalyses a 2'-deoxyribonucleoside 5'-diphosphate + ATP = a 2'-deoxyribonucleoside 5'-triphosphate + ADP. The catalysed reaction is a ribonucleoside 5'-diphosphate + ATP = a ribonucleoside 5'-triphosphate + ADP. Major role in the synthesis of nucleoside triphosphates other than ATP. The ATP gamma phosphate is transferred to the NDP beta phosphate via a ping-pong mechanism, using a phosphorylated active-site intermediate. The protein is Nucleoside diphosphate kinase of Thioalkalivibrio sulfidiphilus (strain HL-EbGR7).